A 291-amino-acid chain; its full sequence is 5'-3' exonuclease (291 aa).

Positions 176 to 269 (APYQVVEYKG…DLTGLKPIQK (94 aa)) constitute a 5'-3' exonuclease domain.

5'-3' exonuclease acting preferentially on double-stranded DNA. The polypeptide is 5'-3' exonuclease (polA) (Mycoplasma genitalium (strain ATCC 33530 / DSM 19775 / NCTC 10195 / G37) (Mycoplasmoides genitalium)).